The primary structure comprises 144 residues: D-aminoacyl-tRNA deacylase (144 aa).

The Gly-cisPro motif, important for rejection of L-amino acids signature appears at 136–137 (GP).

It belongs to the DTD family. In terms of assembly, homodimer.

Its subcellular location is the cytoplasm. The catalysed reaction is glycyl-tRNA(Ala) + H2O = tRNA(Ala) + glycine + H(+). It carries out the reaction a D-aminoacyl-tRNA + H2O = a tRNA + a D-alpha-amino acid + H(+). An aminoacyl-tRNA editing enzyme that deacylates mischarged D-aminoacyl-tRNAs. Also deacylates mischarged glycyl-tRNA(Ala), protecting cells against glycine mischarging by AlaRS. Acts via tRNA-based rather than protein-based catalysis; rejects L-amino acids rather than detecting D-amino acids in the active site. By recycling D-aminoacyl-tRNA to D-amino acids and free tRNA molecules, this enzyme counteracts the toxicity associated with the formation of D-aminoacyl-tRNA entities in vivo and helps enforce protein L-homochirality. The sequence is that of D-aminoacyl-tRNA deacylase from Corynebacterium efficiens (strain DSM 44549 / YS-314 / AJ 12310 / JCM 11189 / NBRC 100395).